A 183-amino-acid polypeptide reads, in one-letter code: Ribosome maturation factor RimP (183 aa).

Belongs to the RimP family.

Its subcellular location is the cytoplasm. In terms of biological role, required for maturation of 30S ribosomal subunits. The protein is Ribosome maturation factor RimP of Leptothrix cholodnii (strain ATCC 51168 / LMG 8142 / SP-6) (Leptothrix discophora (strain SP-6)).